A 183-amino-acid polypeptide reads, in one-letter code: TATA-box-binding protein 2 (183 aa).

Repeat copies occupy residues 8–84 and 99–177.

The protein belongs to the TBP family.

In terms of biological role, general factor that plays a role in the activation of archaeal genes transcribed by RNA polymerase. Binds specifically to the TATA box promoter element which lies close to the position of transcription initiation. The chain is TATA-box-binding protein 2 from Methanosarcina mazei (strain ATCC BAA-159 / DSM 3647 / Goe1 / Go1 / JCM 11833 / OCM 88) (Methanosarcina frisia).